The following is a 156-amino-acid chain: Small ribosomal subunit protein uS7 (156 aa).

It belongs to the universal ribosomal protein uS7 family. Part of the 30S ribosomal subunit. Contacts proteins S9 and S11.

In terms of biological role, one of the primary rRNA binding proteins, it binds directly to 16S rRNA where it nucleates assembly of the head domain of the 30S subunit. Is located at the subunit interface close to the decoding center, probably blocks exit of the E-site tRNA. The sequence is that of Small ribosomal subunit protein uS7 from Geobacter sp. (strain M21).